The following is a 366-amino-acid chain: tRNA/tmRNA (uracil-C(5))-methyltransferase (366 aa).

5 residues coordinate S-adenosyl-L-methionine: Gln-187, Tyr-215, Asn-220, Glu-236, and Asp-297. Cys-322 functions as the Nucleophile in the catalytic mechanism. Glu-356 (proton acceptor) is an active-site residue.

Belongs to the class I-like SAM-binding methyltransferase superfamily. RNA M5U methyltransferase family. TrmA subfamily.

The enzyme catalyses uridine(54) in tRNA + S-adenosyl-L-methionine = 5-methyluridine(54) in tRNA + S-adenosyl-L-homocysteine + H(+). The catalysed reaction is uridine(341) in tmRNA + S-adenosyl-L-methionine = 5-methyluridine(341) in tmRNA + S-adenosyl-L-homocysteine + H(+). Its function is as follows. Dual-specificity methyltransferase that catalyzes the formation of 5-methyluridine at position 54 (m5U54) in all tRNAs, and that of position 341 (m5U341) in tmRNA (transfer-mRNA). The sequence is that of tRNA/tmRNA (uracil-C(5))-methyltransferase from Marinomonas sp. (strain MWYL1).